The primary structure comprises 179 residues: Large ribosomal subunit protein uL22c (179 aa).

It belongs to the universal ribosomal protein uL22 family. As to quaternary structure, part of the 50S ribosomal subunit.

The protein resides in the plastid. Its subcellular location is the chloroplast. Its function is as follows. This protein binds specifically to 23S rRNA. In terms of biological role, the globular domain of the protein is located near the polypeptide exit tunnel on the outside of the subunit, while an extended beta-hairpin is found that lines the wall of the exit tunnel in the center of the 70S ribosome. The protein is Large ribosomal subunit protein uL22c (rpl22) of Ranunculus macranthus (Large buttercup).